The sequence spans 167 residues: Centrin-3 (167 aa).

4 consecutive EF-hand domains span residues 25–60 (EQKQ…LGFD), 61–96 (VKKA…WILE), 98–133 (DPHE…LGEN), and 134–167 (MSDE…TGDI). Ca(2+) contacts are provided by Asp-38, Asp-40, Asp-42, and Glu-49. At Ser-135 the chain carries Phosphoserine. 5 residues coordinate Ca(2+): Asp-147, Asp-149, Asp-151, Glu-153, and Glu-158.

Belongs to the centrin family. Monomer. Component of the TREX-2 complex (transcription and export complex 2), composed of at least ENY2, GANP, PCID2, SEM1, and either centrin CETN2 or CETN3. Interacts with USP49.

Its subcellular location is the cytoplasm. The protein resides in the cytoskeleton. The protein localises to the microtubule organizing center. It localises to the centrosome. It is found in the nucleus. Its subcellular location is the nucleolus. The protein resides in the nucleus envelope. The protein localises to the nuclear pore complex. It localises to the centriole. In terms of biological role, plays a fundamental role in microtubule-organizing center structure and function. Its function is as follows. As a component of the TREX-2 complex, involved in the export of mRNAs to the cytoplasm through the nuclear pores. This chain is Centrin-3 (Cetn3), found in Mus musculus (Mouse).